The chain runs to 369 residues: Glutamate 5-kinase (369 aa).

Residue Lys8 coordinates ATP. Ser49, Asp136, and Asn148 together coordinate substrate. ATP is bound by residues 168 to 169 (TD) and 211 to 217 (TGGMATK). The 79-residue stretch at 276 to 354 (KGELWLDEGA…TELANILGYA (79 aa)) folds into the PUA domain.

It belongs to the glutamate 5-kinase family.

Its subcellular location is the cytoplasm. It catalyses the reaction L-glutamate + ATP = L-glutamyl 5-phosphate + ADP. It functions in the pathway amino-acid biosynthesis; L-proline biosynthesis; L-glutamate 5-semialdehyde from L-glutamate: step 1/2. Catalyzes the transfer of a phosphate group to glutamate to form L-glutamate 5-phosphate. The polypeptide is Glutamate 5-kinase (Thermosynechococcus vestitus (strain NIES-2133 / IAM M-273 / BP-1)).